We begin with the raw amino-acid sequence, 225 residues long: MAAAGSYQLALQQLTDSALPTGAFAHSLGFETYIERGLVHDEASFGVWLSAFVGQQLSYSDGLAIRFLYEGVSFAELDALLTAQLLPRQLREASTKMGTRLLEIGTEVFPSPELAEYRALVGAGRAAGHQPLAFAVVARSLGVPLTESLAAYLFAAVTSLTQNAVRAIPLGQNAGQRLLRKASDDVAAAVERIGRLAPDDFGAVSPGLEISQMRHERQRARMFMS.

The protein belongs to the UreF family. In terms of assembly, ureD, UreF and UreG form a complex that acts as a GTP-hydrolysis-dependent molecular chaperone, activating the urease apoprotein by helping to assemble the nickel containing metallocenter of UreC. The UreE protein probably delivers the nickel.

The protein resides in the cytoplasm. Functionally, required for maturation of urease via the functional incorporation of the urease nickel metallocenter. This chain is Urease accessory protein UreF, found in Arthrobacter sp. (strain FB24).